Reading from the N-terminus, the 874-residue chain is Valine--tRNA ligase (874 aa).

The 'HIGH' region motif lies at 46-56; the sequence is PNVTGHLHIGH. The short motif at 523 to 527 is the 'KMSKS' region element; that stretch reads KMSKS. Lysine 526 lines the ATP pocket. A coiled-coil region spans residues 805-874; the sequence is DYVFQMKKAS…TLTDLKQKVK (70 aa).

This sequence belongs to the class-I aminoacyl-tRNA synthetase family. ValS type 1 subfamily. Monomer.

The protein localises to the cytoplasm. The enzyme catalyses tRNA(Val) + L-valine + ATP = L-valyl-tRNA(Val) + AMP + diphosphate. In terms of biological role, catalyzes the attachment of valine to tRNA(Val). As ValRS can inadvertently accommodate and process structurally similar amino acids such as threonine, to avoid such errors, it has a 'posttransfer' editing activity that hydrolyzes mischarged Thr-tRNA(Val) in a tRNA-dependent manner. This is Valine--tRNA ligase from Ureaplasma parvum serovar 3 (strain ATCC 700970).